The chain runs to 112 residues: UPF0102 protein JJD26997_0163 (112 aa).

It belongs to the UPF0102 family.

The polypeptide is UPF0102 protein JJD26997_0163 (Campylobacter jejuni subsp. doylei (strain ATCC BAA-1458 / RM4099 / 269.97)).